Consider the following 421-residue polypeptide: Probable tRNA N6-adenosine threonylcarbamoyltransferase, mitochondrial (421 aa).

A mitochondrion-targeting transit peptide spans 1-22; the sequence is MNIPKILNNNLVLKRIFCRNYS. Residues His-133 and His-137 each coordinate a divalent metal cation. Residues 156–160, Asp-189, Gly-208, Glu-212, 308–309, and Thr-336 contribute to the substrate site; these read LLSGG and AN. A divalent metal cation is bound at residue Asp-337.

This sequence belongs to the KAE1 / TsaD family. As to quaternary structure, homodimer. It depends on a divalent metal cation as a cofactor.

The protein resides in the mitochondrion. The catalysed reaction is L-threonylcarbamoyladenylate + adenosine(37) in tRNA = N(6)-L-threonylcarbamoyladenosine(37) in tRNA + AMP + H(+). Required for the formation of a threonylcarbamoyl group on adenosine at position 37 (t(6)A37) in mitochondrial tRNAs that read codons beginning with adenine. Probably involved in the transfer of the threonylcarbamoyl moiety of threonylcarbamoyl-AMP (TC-AMP) to the N6 group of A37. Involved in mitochondrial genome maintenance. The chain is Probable tRNA N6-adenosine threonylcarbamoyltransferase, mitochondrial from Caenorhabditis elegans.